The chain runs to 511 residues: Bifunctional purine biosynthesis protein PurH (511 aa).

The 145-residue stretch at 1-145 folds into the MGS-like domain; it reads MKKRALVSVS…KNHKFVSVIV (145 aa).

This sequence belongs to the PurH family.

It catalyses the reaction (6R)-10-formyltetrahydrofolate + 5-amino-1-(5-phospho-beta-D-ribosyl)imidazole-4-carboxamide = 5-formamido-1-(5-phospho-D-ribosyl)imidazole-4-carboxamide + (6S)-5,6,7,8-tetrahydrofolate. The enzyme catalyses IMP + H2O = 5-formamido-1-(5-phospho-D-ribosyl)imidazole-4-carboxamide. Its pathway is purine metabolism; IMP biosynthesis via de novo pathway; 5-formamido-1-(5-phospho-D-ribosyl)imidazole-4-carboxamide from 5-amino-1-(5-phospho-D-ribosyl)imidazole-4-carboxamide (10-formyl THF route): step 1/1. It participates in purine metabolism; IMP biosynthesis via de novo pathway; IMP from 5-formamido-1-(5-phospho-D-ribosyl)imidazole-4-carboxamide: step 1/1. The protein is Bifunctional purine biosynthesis protein PurH of Bacillus anthracis (strain A0248).